Consider the following 238-residue polypeptide: E3 ubiquitin-protein ligase ZNRF2 (238 aa).

The disordered stretch occupies residues 1-137 (MGAKQSGPAA…AGGGPGGPRL (137 aa)). Gly-2 carries N-myristoyl glycine lipidation. Ser-20, Ser-24, Ser-75, Ser-82, Ser-107, Ser-110, Ser-141, Ser-147, and Ser-189 each carry phosphoserine. Residues 35–77 (GARAARFAAPVSGAQQPSASAGAAAAAAAAASAPAAPRSRSLG) are compositionally biased toward low complexity. Residues 195 to 236 (CAICLEELQQGDTIARLPCLCIYHKGCIDEWFEVNRSCPEHP) form an RING-type; atypical zinc finger.

As to quaternary structure, interacts with UBE2N. Interacts with ZNRF1. Interacts (when phosphorylated) with YWHAE. Phosphorylated; leading to binding to YWHAE. Phosphorylated by MTOR at Ser-147 and dephosphorylated by PP6C. Ser-147 phosphorylation stimulates vesicle-to-cytosol translocation. Expressed primarily in the nervous system. Expression is more intense in the granular cell layer of hippocampus, Purkinje cell layer of the cerebellum and the granular cell layer of the olfactory bulb. Detected in sensory neurons but not expressed in sympatic or enteric neurons. Expressed in testis, adipose tissue, columnar epithelial cells of the gut.

It localises to the endosome membrane. The protein resides in the lysosome membrane. Its subcellular location is the presynaptic cell membrane. The protein localises to the cytoplasm. The enzyme catalyses S-ubiquitinyl-[E2 ubiquitin-conjugating enzyme]-L-cysteine + [acceptor protein]-L-lysine = [E2 ubiquitin-conjugating enzyme]-L-cysteine + N(6)-ubiquitinyl-[acceptor protein]-L-lysine.. It participates in protein modification; protein ubiquitination. Its function is as follows. E3 ubiquitin-protein ligase that plays a role in the establishment and maintenance of neuronal transmission and plasticity. Ubiquitinates the Na(+)/K(+) ATPase alpha-1 subunit/ATP1A1 and thereby influences its endocytosis and/or degradation. Also acts as a positive regulator of mTORC1 activation by amino acids, which functions upstream of the V-ATPase and of Rag-GTPases. In turn, phosphorylation by mTOR leads to its inhibition via targeting to the cytosol allowing a self-regulating feedback mechanism. This chain is E3 ubiquitin-protein ligase ZNRF2 (Znrf2), found in Mus musculus (Mouse).